The chain runs to 95 residues: Aspartyl/glutamyl-tRNA(Asn/Gln) amidotransferase subunit C (95 aa).

The protein belongs to the GatC family. As to quaternary structure, heterotrimer of A, B and C subunits.

It carries out the reaction L-glutamyl-tRNA(Gln) + L-glutamine + ATP + H2O = L-glutaminyl-tRNA(Gln) + L-glutamate + ADP + phosphate + H(+). The catalysed reaction is L-aspartyl-tRNA(Asn) + L-glutamine + ATP + H2O = L-asparaginyl-tRNA(Asn) + L-glutamate + ADP + phosphate + 2 H(+). In terms of biological role, allows the formation of correctly charged Asn-tRNA(Asn) or Gln-tRNA(Gln) through the transamidation of misacylated Asp-tRNA(Asn) or Glu-tRNA(Gln) in organisms which lack either or both of asparaginyl-tRNA or glutaminyl-tRNA synthetases. The reaction takes place in the presence of glutamine and ATP through an activated phospho-Asp-tRNA(Asn) or phospho-Glu-tRNA(Gln). The protein is Aspartyl/glutamyl-tRNA(Asn/Gln) amidotransferase subunit C of Methylococcus capsulatus (strain ATCC 33009 / NCIMB 11132 / Bath).